A 222-amino-acid polypeptide reads, in one-letter code: Methylthioribulose-1-phosphate dehydratase (222 aa).

The Zn(2+) site is built by H94 and H96.

This sequence belongs to the aldolase class II family. MtnB subfamily. It depends on Zn(2+) as a cofactor.

It carries out the reaction 5-(methylsulfanyl)-D-ribulose 1-phosphate = 5-methylsulfanyl-2,3-dioxopentyl phosphate + H2O. Its pathway is amino-acid biosynthesis; L-methionine biosynthesis via salvage pathway; L-methionine from S-methyl-5-thio-alpha-D-ribose 1-phosphate: step 2/6. Catalyzes the dehydration of methylthioribulose-1-phosphate (MTRu-1-P) into 2,3-diketo-5-methylthiopentyl-1-phosphate (DK-MTP-1-P). The polypeptide is Methylthioribulose-1-phosphate dehydratase (Yersinia pseudotuberculosis serotype O:1b (strain IP 31758)).